Reading from the N-terminus, the 261-residue chain is Cytochrome c oxidase subunit 3 (261 aa).

The Mitochondrial matrix segment spans residues M1–P15. Residues W16 to W34 form a helical membrane-spanning segment. The Mitochondrial intermembrane portion of the chain corresponds to F35–T40. A helical membrane pass occupies residues A41 to T66. At F67–T72 the chain is on the mitochondrial matrix side. The helical transmembrane segment at P73–S105 threads the bilayer. The Mitochondrial intermembrane portion of the chain corresponds to L106 to E128. A helical transmembrane segment spans residues V129–M152. Topologically, residues E153–N155 are mitochondrial matrix. The helical transmembrane segment at R156–E183 threads the bilayer. The Mitochondrial intermembrane portion of the chain corresponds to A184–D190. A helical membrane pass occupies residues G191–L223. Residues K224–H232 are Mitochondrial matrix-facing. A helical membrane pass occupies residues F233–I256. The Mitochondrial intermembrane segment spans residues Y257 to S261.

The protein belongs to the cytochrome c oxidase subunit 3 family. As to quaternary structure, component of the cytochrome c oxidase (complex IV, CIV), a multisubunit enzyme composed of 14 subunits. The complex is composed of a catalytic core of 3 subunits MT-CO1, MT-CO2 and MT-CO3, encoded in the mitochondrial DNA, and 11 supernumerary subunits COX4I, COX5A, COX5B, COX6A, COX6B, COX6C, COX7A, COX7B, COX7C, COX8 and NDUFA4, which are encoded in the nuclear genome. The complex exists as a monomer or a dimer and forms supercomplexes (SCs) in the inner mitochondrial membrane with NADH-ubiquinone oxidoreductase (complex I, CI) and ubiquinol-cytochrome c oxidoreductase (cytochrome b-c1 complex, complex III, CIII), resulting in different assemblies (supercomplex SCI(1)III(2)IV(1) and megacomplex MCI(2)III(2)IV(2)).

It is found in the mitochondrion inner membrane. The enzyme catalyses 4 Fe(II)-[cytochrome c] + O2 + 8 H(+)(in) = 4 Fe(III)-[cytochrome c] + 2 H2O + 4 H(+)(out). Functionally, component of the cytochrome c oxidase, the last enzyme in the mitochondrial electron transport chain which drives oxidative phosphorylation. The respiratory chain contains 3 multisubunit complexes succinate dehydrogenase (complex II, CII), ubiquinol-cytochrome c oxidoreductase (cytochrome b-c1 complex, complex III, CIII) and cytochrome c oxidase (complex IV, CIV), that cooperate to transfer electrons derived from NADH and succinate to molecular oxygen, creating an electrochemical gradient over the inner membrane that drives transmembrane transport and the ATP synthase. Cytochrome c oxidase is the component of the respiratory chain that catalyzes the reduction of oxygen to water. Electrons originating from reduced cytochrome c in the intermembrane space (IMS) are transferred via the dinuclear copper A center (CU(A)) of subunit 2 and heme A of subunit 1 to the active site in subunit 1, a binuclear center (BNC) formed by heme A3 and copper B (CU(B)). The BNC reduces molecular oxygen to 2 water molecules using 4 electrons from cytochrome c in the IMS and 4 protons from the mitochondrial matrix. The chain is Cytochrome c oxidase subunit 3 (MT-CO3) from Ovis aries (Sheep).